A 333-amino-acid polypeptide reads, in one-letter code: MDEKDRPKNLREEEEKPSEETKILISSLPWEIDYLGNKLFNYEGYWYSEDILQSIPNIHTGFQPQETDIILASFYKSGTTWLKALTFALVQRSKHSLEDHQHPLLHHNPHEIVPNLELDLYLKSSKPDLTKFLSSSSSSPRLFSTHMSLDPLQVPLKENLCKIVYVCRNVKDVMVSVWYFRQSKKITRAEDYSLEAIFESFCNGVTLHGPFWDHALSYWRGSLEDPKHFLFMRYEDLKAEPRTQVKRLAEFLDCPFTKEEEDSGSVDKILELCSLSNLRSVEINKTRTSSRVDFKSYFRKGQVGDWKSYMTPEMVDKIDMIIEEKLKGSGLKF.

76–81 (KSGTTW) provides a ligand contact to 3'-phosphoadenylyl sulfate. Residue histidine 146 is the Proton acceptor of the active site. 3'-phosphoadenylyl sulfate-binding positions include arginine 168, serine 176, tyrosine 234, and 299–301 (RKG).

This sequence belongs to the sulfotransferase 1 family. Expressed in roots.

Its subcellular location is the cytoplasm. Sulfotransferase that utilizes 3'-phospho-5'-adenylyl sulfate (PAPS) as sulfonate donor to specifically catalyze the sulfate conjugation of brassinosteroids, including castasterone (CS), brassinolide (BL), related 24-epimers, and the naturally occurring (22R, 23R)-28-homobrassinosteroids. No activity on phenolic acids, desulfo-glucosinolates, flavonoids, steroids, gibberellic acids, cytokinins, phenylpropanoids, hydroxyjasmonates and coumarins. The protein is Cytosolic sulfotransferase 10 (SOT10) of Arabidopsis thaliana (Mouse-ear cress).